A 209-amino-acid chain; its full sequence is MKTSEWIDISQPLNNDIATWPGDTPFSYEVSWSKEESGSVNVGKLTMSIHTGTHIDAPFHFDNEGKKVIDLDVQVYVGPARIIDVSNLESIGKKELEKFHLEGVERLLLRTSSHGKANEFPDIIPHLRADIAPFLSEKGIRLIGVDVPSVDPLDDKELAAHHQLFKHGIHILENVVLDHVADGDYELIALPLALSDADGSPVRAVIRPI.

Substrate is bound at residue W20. Zn(2+) contacts are provided by H50, H54, and D56. H60 functions as the Proton donor/acceptor in the catalytic mechanism. Residues H161 and E173 each contribute to the Zn(2+) site.

The protein belongs to the Cyclase 1 superfamily. KynB family. Homodimer. Zn(2+) is required as a cofactor.

It catalyses the reaction N-formyl-L-kynurenine + H2O = L-kynurenine + formate + H(+). The protein operates within amino-acid degradation; L-tryptophan degradation via kynurenine pathway; L-kynurenine from L-tryptophan: step 2/2. In terms of biological role, catalyzes the hydrolysis of N-formyl-L-kynurenine to L-kynurenine, the second step in the kynurenine pathway of tryptophan degradation. This is Kynurenine formamidase from Bacillus thuringiensis (strain Al Hakam).